Consider the following 256-residue polypeptide: 2,3,4,5-tetrahydropyridine-2,6-dicarboxylate N-acetyltransferase (256 aa).

Belongs to the transferase hexapeptide repeat family. DapH subfamily.

It catalyses the reaction (S)-2,3,4,5-tetrahydrodipicolinate + acetyl-CoA + H2O = L-2-acetamido-6-oxoheptanedioate + CoA. The protein operates within amino-acid biosynthesis; L-lysine biosynthesis via DAP pathway; LL-2,6-diaminopimelate from (S)-tetrahydrodipicolinate (acetylase route): step 1/3. In terms of biological role, catalyzes the transfer of an acetyl group from acetyl-CoA to tetrahydrodipicolinate. The protein is 2,3,4,5-tetrahydropyridine-2,6-dicarboxylate N-acetyltransferase of Lactococcus lactis subsp. cremoris (strain MG1363).